Consider the following 445-residue polypeptide: UDP-N-acetylmuramoylalanine--D-glutamate ligase (445 aa).

ATP is bound at residue 117-123 (GSNGKTT).

It belongs to the MurCDEF family.

The protein localises to the cytoplasm. The catalysed reaction is UDP-N-acetyl-alpha-D-muramoyl-L-alanine + D-glutamate + ATP = UDP-N-acetyl-alpha-D-muramoyl-L-alanyl-D-glutamate + ADP + phosphate + H(+). The protein operates within cell wall biogenesis; peptidoglycan biosynthesis. Functionally, cell wall formation. Catalyzes the addition of glutamate to the nucleotide precursor UDP-N-acetylmuramoyl-L-alanine (UMA). This chain is UDP-N-acetylmuramoylalanine--D-glutamate ligase, found in Neisseria meningitidis serogroup C (strain 053442).